Consider the following 443-residue polypeptide: Glutamyl-tRNA reductase (443 aa).

Substrate-binding positions include 49 to 52, S109, 114 to 116, and Q120; these read TCNR and ETQ. Residue C50 is the Nucleophile of the active site. 189–194 is a binding site for NADP(+); that stretch reads GAGDMS.

Belongs to the glutamyl-tRNA reductase family. As to quaternary structure, homodimer.

The enzyme catalyses (S)-4-amino-5-oxopentanoate + tRNA(Glu) + NADP(+) = L-glutamyl-tRNA(Glu) + NADPH + H(+). Its pathway is porphyrin-containing compound metabolism; protoporphyrin-IX biosynthesis; 5-aminolevulinate from L-glutamyl-tRNA(Glu): step 1/2. In terms of biological role, catalyzes the NADPH-dependent reduction of glutamyl-tRNA(Glu) to glutamate 1-semialdehyde (GSA). The polypeptide is Glutamyl-tRNA reductase (Staphylococcus saprophyticus subsp. saprophyticus (strain ATCC 15305 / DSM 20229 / NCIMB 8711 / NCTC 7292 / S-41)).